We begin with the raw amino-acid sequence, 156 residues long: 6,7-dimethyl-8-ribityllumazine synthase (156 aa).

5-amino-6-(D-ribitylamino)uracil is bound by residues phenylalanine 22, 57–59, and 81–83; these read AVE and CVI. 86–87 serves as a coordination point for (2S)-2-hydroxy-3-oxobutyl phosphate; the sequence is GT. The Proton donor role is filled by histidine 89. Phenylalanine 114 contacts 5-amino-6-(D-ribitylamino)uracil. Arginine 128 is a binding site for (2S)-2-hydroxy-3-oxobutyl phosphate.

The protein belongs to the DMRL synthase family. As to quaternary structure, forms an icosahedral capsid composed of 60 subunits, arranged as a dodecamer of pentamers.

It catalyses the reaction (2S)-2-hydroxy-3-oxobutyl phosphate + 5-amino-6-(D-ribitylamino)uracil = 6,7-dimethyl-8-(1-D-ribityl)lumazine + phosphate + 2 H2O + H(+). It participates in cofactor biosynthesis; riboflavin biosynthesis; riboflavin from 2-hydroxy-3-oxobutyl phosphate and 5-amino-6-(D-ribitylamino)uracil: step 1/2. Its function is as follows. Catalyzes the formation of 6,7-dimethyl-8-ribityllumazine by condensation of 5-amino-6-(D-ribitylamino)uracil with 3,4-dihydroxy-2-butanone 4-phosphate. This is the penultimate step in the biosynthesis of riboflavin. The polypeptide is 6,7-dimethyl-8-ribityllumazine synthase (Vibrio cholerae serotype O1 (strain ATCC 39315 / El Tor Inaba N16961)).